Reading from the N-terminus, the 114-residue chain is Small ribosomal subunit protein uS15 (114 aa).

This sequence belongs to the universal ribosomal protein uS15 family.

The protein is Small ribosomal subunit protein uS15 (RpS13) of Musca domestica (House fly).